We begin with the raw amino-acid sequence, 716 residues long: Polyribonucleotide nucleotidyltransferase (716 aa).

Mg(2+)-binding residues include Asp486 and Asp492. Residues 553–612 (PHIYNIKINPEKIKDVIGKGGAVIRALSDETDTKIDISDDGNITIAALSQKSAAFAQQRI) enclose the KH domain. An S1 motif domain is found at 622–690 (GRIYQGTVTR…RQGRIRLSIK (69 aa)).

The protein belongs to the polyribonucleotide nucleotidyltransferase family. As to quaternary structure, component of the RNA degradosome, which is a multiprotein complex involved in RNA processing and mRNA degradation. Mg(2+) is required as a cofactor.

It is found in the cytoplasm. The enzyme catalyses RNA(n+1) + phosphate = RNA(n) + a ribonucleoside 5'-diphosphate. In terms of biological role, involved in mRNA degradation. Catalyzes the phosphorolysis of single-stranded polyribonucleotides processively in the 3'- to 5'-direction. The sequence is that of Polyribonucleotide nucleotidyltransferase from Hamiltonella defensa subsp. Acyrthosiphon pisum (strain 5AT).